Reading from the N-terminus, the 257-residue chain is Protein MoaE (257 aa).

6–29 (VITGGGTGIGAACARLMHPAGERV) contacts NAD(+). Positions 75-96 (LMSSSAAPAGWATAPPPRPATA) are disordered. Ser132 is a substrate binding site. The Proton acceptor role is filled by Tyr145.

It belongs to the short-chain dehydrogenases/reductases (SDR) family.

Might catalyze the conversion of monoamine compounds or their metabolites. The protein is Protein MoaE (moaE) of Klebsiella aerogenes (Enterobacter aerogenes).